A 238-amino-acid polypeptide reads, in one-letter code: 14-3-3 family protein artA (238 aa).

It belongs to the 14-3-3 family.

Its function is as follows. 14-3-3 family protein that plays a role in the morphological differentiation and secondary metabolism biosynthesis. Required for normal fungal morphogenesis in an environment-dependent manner, affecting the balance between production of conidiophores and the formation of sclerotia, resistant structures that are necessary for the dissemination and survival. Acts as a positive regulator of conidiation and a negative regulator of sclerotial production. Also regulates the production of secondary metabolites such as aflatoxin, but also the indole-tetramic acid mycotoxin cyclopiazonic acid (CPA) and ustiloxin, an inhibitor of microtubule assembly. This chain is 14-3-3 family protein artA, found in Aspergillus flavus (strain ATCC 200026 / FGSC A1120 / IAM 13836 / NRRL 3357 / JCM 12722 / SRRC 167).